The primary structure comprises 275 residues: Elongation factor Ts (275 aa).

The segment at 76–79 (TDFV) is involved in Mg(2+) ion dislocation from EF-Tu.

This sequence belongs to the EF-Ts family.

It is found in the cytoplasm. Associates with the EF-Tu.GDP complex and induces the exchange of GDP to GTP. It remains bound to the aminoacyl-tRNA.EF-Tu.GTP complex up to the GTP hydrolysis stage on the ribosome. The chain is Elongation factor Ts from Rhodococcus jostii (strain RHA1).